The primary structure comprises 237 residues: Phosphatidylserine decarboxylase proenzyme (237 aa).

Serine 206 serves as the catalytic Schiff-base intermediate with substrate; via pyruvic acid. Pyruvic acid (Ser); by autocatalysis is present on serine 206.

This sequence belongs to the phosphatidylserine decarboxylase family. PSD-A subfamily. In terms of assembly, heterodimer of a large membrane-associated beta subunit and a small pyruvoyl-containing alpha subunit. Pyruvate serves as cofactor. In terms of processing, is synthesized initially as an inactive proenzyme. Formation of the active enzyme involves a self-maturation process in which the active site pyruvoyl group is generated from an internal serine residue via an autocatalytic post-translational modification. Two non-identical subunits are generated from the proenzyme in this reaction, and the pyruvate is formed at the N-terminus of the alpha chain, which is derived from the carboxyl end of the proenzyme. The post-translation cleavage follows an unusual pathway, termed non-hydrolytic serinolysis, in which the side chain hydroxyl group of the serine supplies its oxygen atom to form the C-terminus of the beta chain, while the remainder of the serine residue undergoes an oxidative deamination to produce ammonia and the pyruvoyl prosthetic group on the alpha chain.

The protein resides in the cell membrane. The enzyme catalyses a 1,2-diacyl-sn-glycero-3-phospho-L-serine + H(+) = a 1,2-diacyl-sn-glycero-3-phosphoethanolamine + CO2. The protein operates within phospholipid metabolism; phosphatidylethanolamine biosynthesis; phosphatidylethanolamine from CDP-diacylglycerol: step 2/2. Its function is as follows. Catalyzes the formation of phosphatidylethanolamine (PtdEtn) from phosphatidylserine (PtdSer). This Rhodococcus erythropolis (strain PR4 / NBRC 100887) protein is Phosphatidylserine decarboxylase proenzyme.